Consider the following 76-residue polypeptide: Protein krueppel (76 aa).

C2H2-type zinc fingers lie at residues 11–33 (FECSECHKRFTRDHHLKTHLRLH) and 39–61 (YSCPHCPRHFVQVANLRRHLRVH).

Belongs to the krueppel C2H2-type zinc-finger protein family.

It localises to the nucleus. Functionally, krueppel is a gap class segmentation protein. In Manduca sexta (Tobacco hawkmoth), this protein is Protein krueppel (Kr).